The chain runs to 72 residues: Large ribosomal subunit protein bL28 (72 aa).

It belongs to the bacterial ribosomal protein bL28 family.

The sequence is that of Large ribosomal subunit protein bL28 from Pelodictyon phaeoclathratiforme (strain DSM 5477 / BU-1).